A 99-amino-acid chain; its full sequence is RING finger protein Z (99 aa).

Gly-2 carries the N-myristoyl glycine; by host lipid modification. An RING-type; atypical zinc finger spans residues 31–67 (CKSCWFENKGLVECNNHYLCLNCLTLLLSVSNRCPIC). The interval 74–99 (KLRPSAAPTAPPTGAADSIRPPPYSP) is disordered. The span at 77 to 89 (PSAAPTAPPTGAA) shows a compositional bias: low complexity. A PTAP/PSAP motif motif is present at residues 81–84 (PTAP). Residues 94–97 (PPPY) carry the PPXY motif motif.

Belongs to the arenaviridae Z protein family. Interacts with protein NP; this interaction probably directs the encapsidated genome to budding sites. Interacts (via RING domain) with polymerase L; this interaction inhibits viral transcription and replication, Z partially blocks the product exit tunnel for the releasing nascent RNA product. Interacts with the glycoprotein complex; this interaction plays a role in virion budding. Interacts with host eIF4E; this interaction results in eIF4E reduced affinity for its substrate, the 5'-m7 G cap structure. Interacts (via late-budding domain) with host TSG101; this interaction is essential for budding and release of viral particles. Interacts with host RPLP0; this interaction may serve to load ribosome-like particles inside the virion. Interacts with host PML; this interaction induces PML bodies redistribution in the cytoplasm upon viral infection. Interacts with host TAX1BP1. Myristoylation is required for the role of RING finger protein Z in assembly and budding.

Its subcellular location is the virion. The protein resides in the host cytoplasm. It localises to the host perinuclear region. It is found in the host cell membrane. In terms of biological role, plays a crucial role in virion assembly and budding. Expressed late in the virus life cycle, it acts as an inhibitor of viral transcription and RNA synthesis by interacting with the viral polymerase L. Presumably recruits the NP encapsidated genome to cellular membranes at budding sites via direct interaction with NP. Plays critical roles in the final steps of viral release by interacting with host TSG101, a member of the vacuolar protein-sorting pathway and using other cellular host proteins involved in vesicle formation pathway. The budding of the virus progeny occurs after association of protein Z with the viral glycoprotein complex SSP-GP1-GP2 at the cell periphery, step that requires myristoylation of protein Z. Also selectively represses protein production by associating with host eIF4E. In cell-based minigenome assay, has an inhibitory effect on the ribonucleoprotein machinery (vRNP), which is responsible for the replication and transcription of the viral genome. This is RING finger protein Z from Homo sapiens (Human).